The sequence spans 344 residues: F-box protein HRT3 (344 aa).

The TPR repeat unit spans residues Ala14–Val47. In terms of domain architecture, F-box spans Trp98 to Ala148.

Interacts with SKP1. Component of the probable SCF(HRT3) complex containing CDC53, SKP1, RBX1 and HRT3.

The protein operates within protein modification; protein ubiquitination. Its function is as follows. Substrate recognition component of a SCF (SKP1-CUL1-F-box protein) E3 ubiquitin-protein ligase complex which mediates the ubiquitination and subsequent proteasomal degradation of target proteins. Probably recognizes and binds to phosphorylated target proteins. The sequence is that of F-box protein HRT3 (HRT3) from Saccharomyces cerevisiae (strain ATCC 204508 / S288c) (Baker's yeast).